Reading from the N-terminus, the 250-residue chain is 5-oxoprolinase subunit A (250 aa).

The protein belongs to the LamB/PxpA family. As to quaternary structure, forms a complex composed of PxpA, PxpB and PxpC.

It carries out the reaction 5-oxo-L-proline + ATP + 2 H2O = L-glutamate + ADP + phosphate + H(+). Catalyzes the cleavage of 5-oxoproline to form L-glutamate coupled to the hydrolysis of ATP to ADP and inorganic phosphate. This Staphylococcus haemolyticus (strain JCSC1435) protein is 5-oxoprolinase subunit A.